Consider the following 95-residue polypeptide: Signal recognition particle 19 kDa protein (95 aa).

It belongs to the SRP19 family. As to quaternary structure, part of the signal recognition particle protein translocation system, which is composed of SRP and FtsY. Archaeal SRP consists of a 7S RNA molecule of 300 nucleotides and two protein subunits: SRP54 and SRP19.

It is found in the cytoplasm. In terms of biological role, involved in targeting and insertion of nascent membrane proteins into the cytoplasmic membrane. Binds directly to 7S RNA and mediates binding of the 54 kDa subunit of the SRP. The sequence is that of Signal recognition particle 19 kDa protein from Staphylothermus marinus (strain ATCC 43588 / DSM 3639 / JCM 9404 / F1).